We begin with the raw amino-acid sequence, 275 residues long: Transmembrane protein 45B (275 aa).

7 consecutive transmembrane segments (helical) span residues 7-27 (HALP…KYPL), 47-67 (IVEA…EQFV), 94-114 (LFFA…HVPL), 116-136 (VDRL…YYHV), 146-166 (IHSL…LEVI), 180-200 (LIIL…PPFG), and 212-232 (LMFI…IVAV). Phosphoserine is present on residues Ser-270 and Ser-272.

Belongs to the TMEM45 family. (Microbial infection) Interacts with sindbis virus nsP1 and nsP4; these interactions lead to viral RNA replication inhibition. As to quaternary structure, (Microbial infection) Interacts with chikungunya virus nsP1 and nsP4; these interactions lead to viral RNA replication inhibition.

The protein localises to the endosome membrane. It is found in the lysosome membrane. It localises to the golgi apparatus. The protein resides in the trans-Golgi network membrane. Plays a role in innate immunity. Mechanistically, promotes alphaviruses RNA degradation by interacting with the viral polymerase nsP4 and the mRNA-capping enzyme nsP1 and thereby interfering with the interaction between viral RNA and nsP1. The polypeptide is Transmembrane protein 45B (TMEM45B) (Homo sapiens (Human)).